A 1320-amino-acid chain; its full sequence is Bifunctional protein PutA (1320 aa).

A proline dehydrogenase region spans residues 228-574 (LSRSLNRIIG…SFVNRIADTS (347 aa)). Residues 653–1119 (QPVAAGEMSP…LANRPESALA (467 aa)) form an aldehyde dehydrogenase region. Catalysis depends on residues Glu883 and Cys917.

The protein in the N-terminal section; belongs to the proline dehydrogenase family. This sequence in the C-terminal section; belongs to the aldehyde dehydrogenase family. Homodimer. It depends on FAD as a cofactor.

It carries out the reaction L-proline + a quinone = (S)-1-pyrroline-5-carboxylate + a quinol + H(+). The catalysed reaction is L-glutamate 5-semialdehyde + NAD(+) + H2O = L-glutamate + NADH + 2 H(+). The protein operates within amino-acid degradation; L-proline degradation into L-glutamate; L-glutamate from L-proline: step 1/2. Its pathway is amino-acid degradation; L-proline degradation into L-glutamate; L-glutamate from L-proline: step 2/2. Functionally, oxidizes proline to glutamate for use as a carbon and nitrogen source and also function as a transcriptional repressor of the put operon. This is Bifunctional protein PutA (putA) from Escherichia coli (strain K12).